The primary structure comprises 254 residues: 5'/3'-nucleotidase SurE (254 aa).

A divalent metal cation is bound by residues D9, D10, S40, and N93.

Belongs to the SurE nucleotidase family. It depends on a divalent metal cation as a cofactor.

Its subcellular location is the cytoplasm. It catalyses the reaction a ribonucleoside 5'-phosphate + H2O = a ribonucleoside + phosphate. The enzyme catalyses a ribonucleoside 3'-phosphate + H2O = a ribonucleoside + phosphate. It carries out the reaction [phosphate](n) + H2O = [phosphate](n-1) + phosphate + H(+). Nucleotidase with a broad substrate specificity as it can dephosphorylate various ribo- and deoxyribonucleoside 5'-monophosphates and ribonucleoside 3'-monophosphates with highest affinity to 3'-AMP. Also hydrolyzes polyphosphate (exopolyphosphatase activity) with the preference for short-chain-length substrates (P20-25). Might be involved in the regulation of dNTP and NTP pools, and in the turnover of 3'-mononucleotides produced by numerous intracellular RNases (T1, T2, and F) during the degradation of various RNAs. This is 5'/3'-nucleotidase SurE from Photorhabdus laumondii subsp. laumondii (strain DSM 15139 / CIP 105565 / TT01) (Photorhabdus luminescens subsp. laumondii).